The primary structure comprises 82 residues: Acyl carrier protein (82 aa).

One can recognise a Carrier domain in the interval 4–79 (PEMEARLKQI…DALNYIEQKL (76 aa)). O-(pantetheine 4'-phosphoryl)serine is present on S39.

Belongs to the acyl carrier protein (ACP) family. Post-translationally, 4'-phosphopantetheine is transferred from CoA to a specific serine of apo-ACP by AcpS. This modification is essential for activity because fatty acids are bound in thioester linkage to the sulfhydryl of the prosthetic group.

The protein resides in the cytoplasm. It participates in lipid metabolism; fatty acid biosynthesis. Functionally, carrier of the growing fatty acid chain in fatty acid biosynthesis. This is Acyl carrier protein from Roseiflexus castenholzii (strain DSM 13941 / HLO8).